Reading from the N-terminus, the 79-residue chain is Acyl carrier protein (79 aa).

In terms of domain architecture, Carrier spans 2–77 (SDVAERVKKI…DAVNFLEKAT (76 aa)). Residue S37 is modified to O-(pantetheine 4'-phosphoryl)serine.

Belongs to the acyl carrier protein (ACP) family. 4'-phosphopantetheine is transferred from CoA to a specific serine of apo-ACP by AcpS. This modification is essential for activity because fatty acids are bound in thioester linkage to the sulfhydryl of the prosthetic group.

It localises to the cytoplasm. The protein operates within lipid metabolism; fatty acid biosynthesis. Functionally, carrier of the growing fatty acid chain in fatty acid biosynthesis. This Methylocella silvestris (strain DSM 15510 / CIP 108128 / LMG 27833 / NCIMB 13906 / BL2) protein is Acyl carrier protein.